Consider the following 397-residue polypeptide: Stearoyl-[acyl-carrier-protein] 9-desaturase, chloroplastic (397 aa).

The transit peptide at 1–33 directs the protein to the chloroplast; it reads MALNFNAIASKSQKLPCFALPPKATLRSPKFSM. The Fe cation site is built by Glu-138, Glu-176, His-179, Glu-229, Glu-262, and His-265.

The protein belongs to the fatty acid desaturase type 2 family. In terms of assembly, homodimer. The cofactor is Fe(2+).

It is found in the plastid. It localises to the chloroplast. The catalysed reaction is octadecanoyl-[ACP] + 2 reduced [2Fe-2S]-[ferredoxin] + O2 + 2 H(+) = (9Z)-octadecenoyl-[ACP] + 2 oxidized [2Fe-2S]-[ferredoxin] + 2 H2O. Its pathway is lipid metabolism; fatty acid metabolism. Its function is as follows. Converts stearoyl-ACP to oleoyl-ACP by introduction of a cis double bond between carbons 9 and 10 of the acyl chain. The protein is Stearoyl-[acyl-carrier-protein] 9-desaturase, chloroplastic of Gossypium hirsutum (Upland cotton).